The chain runs to 142 residues: Nucleoside diphosphate kinase (142 aa).

Lys-11, Phe-59, Arg-87, Thr-93, Arg-104, and Asn-114 together coordinate ATP. The active-site Pros-phosphohistidine intermediate is His-117.

The protein belongs to the NDK family. As to quaternary structure, homotetramer. Requires Mg(2+) as cofactor.

Its subcellular location is the cytoplasm. The enzyme catalyses a 2'-deoxyribonucleoside 5'-diphosphate + ATP = a 2'-deoxyribonucleoside 5'-triphosphate + ADP. The catalysed reaction is a ribonucleoside 5'-diphosphate + ATP = a ribonucleoside 5'-triphosphate + ADP. Functionally, major role in the synthesis of nucleoside triphosphates other than ATP. The ATP gamma phosphate is transferred to the NDP beta phosphate via a ping-pong mechanism, using a phosphorylated active-site intermediate. The protein is Nucleoside diphosphate kinase of Pectobacterium atrosepticum (strain SCRI 1043 / ATCC BAA-672) (Erwinia carotovora subsp. atroseptica).